A 793-amino-acid polypeptide reads, in one-letter code: Transcription factor opdR (793 aa).

3 disordered regions span residues methionine 1–arginine 29, threonine 60–asparagine 113, and leucine 457–glutamate 476. Positions cysteine 25–cysteine 53 form a DNA-binding region, zn(2)-C6 fungal-type.

The protein resides in the nucleus. Transcription factor; part of the gene cluster that mediates the biosynthesis of oxopyrrolidines, polyketide-amino acid hybrid compounds with feature structures of tetramic acid. The chain is Transcription factor opdR from Penicillium oxalicum (strain 114-2 / CGMCC 5302) (Penicillium decumbens).